Consider the following 154-residue polypeptide: Myoglobin (154 aa).

Residues 2–148 enclose the Globin domain; the sequence is GLSDGEWQSV…FRNDIAAKYK (147 aa). Position 4 is a phosphoserine (Ser-4). His-65 provides a ligand contact to nitrite. Residue His-65 participates in O2 binding. Residue Thr-68 is modified to Phosphothreonine. His-94 is a heme b binding site.

The protein belongs to the globin family. As to quaternary structure, monomeric.

The protein localises to the cytoplasm. It localises to the sarcoplasm. It carries out the reaction Fe(III)-heme b-[protein] + nitric oxide + H2O = Fe(II)-heme b-[protein] + nitrite + 2 H(+). The enzyme catalyses H2O2 + AH2 = A + 2 H2O. In terms of biological role, monomeric heme protein which primary function is to store oxygen and facilitate its diffusion within muscle tissues. Reversibly binds oxygen through a pentacoordinated heme iron and enables its timely and efficient release as needed during periods of heightened demand. Depending on the oxidative conditions of tissues and cells, and in addition to its ability to bind oxygen, it also has a nitrite reductase activity whereby it regulates the production of bioactive nitric oxide. Under stress conditions, like hypoxia and anoxia, it also protects cells against reactive oxygen species thanks to its pseudoperoxidase activity. The protein is Myoglobin (MB) of Perodicticus potto edwarsi (Potto).